Reading from the N-terminus, the 263-residue chain is Bradykinin-potentiating and C-type natriuretic peptides (263 aa).

Positions 1–23 (MFVSRLAASGLLLLALMALSLDG) are cleaved as a signal peptide. Residues 24–30 (KPVQQWS) constitute a propeptide that is removed on maturation. Q31 is modified (pyrrolidone carboxylic acid). Positions 42–48 (LVVQQWS) are excised as a propeptide. Q49 is modified (pyrrolidone carboxylic acid). Positions 60–66 (LVVQQWS) are excised as a propeptide. The residue at position 67 (Q67) is a Pyrrolidone carboxylic acid. A propeptide spanning residues 78–84 (LVVQQWS) is cleaved from the precursor. A Pyrrolidone carboxylic acid modification is found at Q85. An angiotensin-converting enzyme active site binding region spans residues 89 to 95 (PRPKIPP). Positions 96-102 (LVVQQWS) are excised as a propeptide. At Q103 the chain carries Pyrrolidone carboxylic acid. The interval 107-113 (PRPKIPP) is angiotensin-converting enzyme active site binding. Positions 114-116 (LVV) are excised as a propeptide. Q117 carries the pyrrolidone carboxylic acid modification. A propeptide spanning residues 128-130 (LLL) is cleaved from the precursor. At Q131 the chain carries Pyrrolidone carboxylic acid. A propeptide spanning residues 137–241 (AGGTTALREE…ARRLKGLVKK (105 aa)) is cleaved from the precursor. 2 disordered regions span residues 152 to 171 (EAAS…GSKA) and 177 to 205 (RLSK…GKQA). Residues 181 to 192 (SKGASATSASAS) are compositionally biased toward low complexity. The span at 194–204 (PMRDLRTDGKQ) shows a compositional bias: basic and acidic residues. A disulfide bridge links C247 with C263.

The protein in the N-terminal section; belongs to the bradykinin-potentiating peptide family. This sequence in the C-terminal section; belongs to the natriuretic peptide family. Expressed by the venom gland.

The protein localises to the secreted. Its function is as follows. Inhibits the rabbit lung angiotensin-converting enzyme (ACE) (IC(50)=15 uM). Contracts the rat gastric fundus smooth muscle in a rapid and transient manner. Causes no contraction of the rat gastric fundus smooth muscle even at high concentrations. Causes very weak contraction of the isolated guinea pig ileum. Causes weak contraction on rat uterus. Functionally, inhibits the activity of the angiotensin-converting enzyme (ACE) by a preferential interaction with its C-domain (Ki=30 nM, IC(50)=1.1 uM). It binds ACE in a zinc-independent manner. Also potentiates the hypotensive effects of bradykinin. Causes high contraction of the isolated guinea pig ileum and weak contraction on rat uterus. In terms of biological role, inhibits the activity of the angiotensin-converting enzyme (ACE) by interacting with the same potency to its C- and N-domains. Inhibits the rabbit lung angiotensin-converting enzyme (ACE) (IC(50)=7.1 uM). Causes weak contraction of the isolated guinea pig ileum. Causes weak contraction on rat uterus. Its function is as follows. Inhibits the rabbit lung angiotensin-converting enzyme (ACE) (IC(50)=46 uM). Synthetic Leu3-blomhotin contracts the rat gastric fundus smooth muscle in a rapid and transient manner. Causes moderate contraction of the isolated guinea pig ileum. Causes weak contraction on rat uterus. Causes weak contraction of the isolated guinea pig ileum. Causes about 50-fold more potentiating activity on rat uterus than on guinea pig ileum. Functionally, synthetic peptide potentiates the bradykinin in vivo. In terms of biological role, synthetic peptide does not show any bradykinin-potentiating effects. Its function is as follows. has a vasorelaxant activity in rat aortic strips and a diuretic potency in anesthetized rats. May act by activating natriuretic receptors (NPR1 and/or NPR2). This chain is Bradykinin-potentiating and C-type natriuretic peptides, found in Gloydius blomhoffii (Mamushi).